The primary structure comprises 102 residues: Thioredoxin (102 aa).

The 101-residue stretch at 2 to 102 (LHIDELTFEN…ILIHTINKYL (101 aa)) folds into the Thioredoxin domain. Catalysis depends on nucleophile residues Cys29 and Cys32. A disulfide bridge connects residues Cys29 and Cys32.

It belongs to the thioredoxin family.

The protein resides in the plastid. Its subcellular location is the chloroplast. Participates in various redox reactions through the reversible oxidation of its active center dithiol to a disulfide and catalyzes dithiol-disulfide exchange reactions. The sequence is that of Thioredoxin (trxA) from Cyanidioschyzon merolae (strain NIES-3377 / 10D) (Unicellular red alga).